The sequence spans 200 residues: ATP synthase subunit s, mitochondrial (200 aa).

Residues 1 to 25 constitute a mitochondrion transit peptide; the sequence is MMLFGKVSQQLCGIKKLPWSCDSRY. The interval 1–61 is N-terminal domain; it reads MMLFGKVSQQ…SEWLLRCGAM (61 aa). Glycine 59 serves as a coordination point for Mg(2+). 4 LRR repeats span residues 62–87, 88–116, 117–141, and 142–173; these read VRYHGQERWQTDYNHLPTGPLDKYKI, QAIDATNSCIMSIGFDHMVGLQHVEKIRL, CKCHFIEDDCLLRLGQLENLQKSIL, and EMEIISCGNITDKGIIASRHLRNLKYLLLSDL. Threonine 93 is a Mg(2+) binding site.

It belongs to the ATP synthase subunit s family. Homotetramer. Associates with ATP synthase.

The protein resides in the mitochondrion. It localises to the mitochondrion inner membrane. Its function is as follows. Involved in regulation of mitochondrial membrane ATP synthase. Necessary for H(+) conduction of ATP synthase. Facilitates energy-driven catalysis of ATP synthesis by blocking a proton leak through an alternative proton exit pathway. In Macaca fascicularis (Crab-eating macaque), this protein is ATP synthase subunit s, mitochondrial (DMAC2L).